The primary structure comprises 104 residues: Ig lambda-3 chain C region (104 aa).

Positions 6–99 (PTLTMFPPSP…EGDTVEKSLS (94 aa)) constitute an Ig-like domain. Cysteines 27 and 85 form a disulfide.

The polypeptide is Ig lambda-3 chain C region (Iglc3) (Mus musculus (Mouse)).